Consider the following 20-residue polypeptide: Large ribosomal subunit protein uL5 (20 aa).

It belongs to the universal ribosomal protein uL5 family. Part of the 50S ribosomal subunit; part of the 5S rRNA/L5/L18/L25 subcomplex. Contacts the 5S rRNA and the P site tRNA. Forms a bridge to the 30S subunit in the 70S ribosome.

This is one of the proteins that bind and probably mediate the attachment of the 5S RNA into the large ribosomal subunit, where it forms part of the central protuberance. In the 70S ribosome it contacts protein S13 of the 30S subunit (bridge B1b), connecting the two subunits; this bridge is implicated in subunit movement. Contacts the P site tRNA; the 5S rRNA and some of its associated proteins might help stabilize positioning of ribosome-bound tRNAs. The chain is Large ribosomal subunit protein uL5 (rplE) from Bacillus cereus.